The chain runs to 999 residues: Hypoxia up-regulated protein 1 (999 aa).

A signal peptide spans 1–32; that stretch reads MAATVRRQRPRRLLCWALVAVLLADLLALSDT. N155, N222, and N515 each carry an N-linked (GlcNAc...) asparagine glycan. S567 is modified (phosphoserine). The segment at 567–694 is disordered; that stretch reads SPEEESTLTK…KKPKPARKQK (128 aa). Over residues 574 to 583 the composition is skewed to polar residues; it reads LTKLGNTISS. N-linked (GlcNAc...) asparagine glycosylation occurs at N596. 2 stretches are compositionally biased toward basic and acidic residues: residues 611-626 and 641-668; these read GSKD…KEEA and PKGD…KPNE. A compositionally biased stretch (low complexity) spans 669-680; that stretch reads KGQAGPEGAAPA. N-linked (GlcNAc...) asparagine glycosylation is found at N830, N862, and N869. K883 bears the N6-acetyllysine mark. Positions 909 to 999 are disordered; it reads AKFTKPRPRP…QKRPSKNDEL (91 aa). N-linked (GlcNAc...) asparagine glycans are attached at residues N922 and N931. The segment covering 949 to 962 has biased composition (basic and acidic residues); sequence EEAKPILEPDKEET. The Prevents secretion from ER signature appears at 996–999; the sequence is NDEL.

Belongs to the heat shock protein 70 family. In terms of assembly, part of a large chaperone multiprotein complex comprising DNAJB11, HSP90B1, HSPA5, HYOU, PDIA2, PDIA4, PDIA6, PPIB, SDF2L1, UGGT1 and very small amounts of ERP29, but not, or at very low levels, CALR nor CANX.

It is found in the endoplasmic reticulum lumen. Its function is as follows. Has a pivotal role in cytoprotective cellular mechanisms triggered by oxygen deprivation. Promotes HSPA5/BiP-mediated ATP nucleotide exchange and thereby activates the unfolded protein response (UPR) pathway in the presence of endoplasmic reticulum stress. May play a role as a molecular chaperone and participate in protein folding. This Mus musculus (Mouse) protein is Hypoxia up-regulated protein 1 (Hyou1).